The sequence spans 1297 residues: Phosphoribosylformylglycinamidine synthase (1297 aa).

ATP contacts are provided by residues 307 to 318 and Ala678; that span reads GASTGSGGEIRD. Mg(2+) is bound by residues Glu718, Asn722, and Asp886. The region spanning 1044–1297 is the Glutamine amidotransferase type-1 domain; sequence MAILREQGVN…MFQNARKNLA (254 aa). The active-site Nucleophile is the Cys1137. Residues His1262 and Glu1264 contribute to the active site.

The protein in the N-terminal section; belongs to the FGAMS family. In terms of assembly, monomer.

Its subcellular location is the cytoplasm. The catalysed reaction is N(2)-formyl-N(1)-(5-phospho-beta-D-ribosyl)glycinamide + L-glutamine + ATP + H2O = 2-formamido-N(1)-(5-O-phospho-beta-D-ribosyl)acetamidine + L-glutamate + ADP + phosphate + H(+). It functions in the pathway purine metabolism; IMP biosynthesis via de novo pathway; 5-amino-1-(5-phospho-D-ribosyl)imidazole from N(2)-formyl-N(1)-(5-phospho-D-ribosyl)glycinamide: step 1/2. Its function is as follows. Phosphoribosylformylglycinamidine synthase involved in the purines biosynthetic pathway. Catalyzes the ATP-dependent conversion of formylglycinamide ribonucleotide (FGAR) and glutamine to yield formylglycinamidine ribonucleotide (FGAM) and glutamate. This is Phosphoribosylformylglycinamidine synthase from Vibrio vulnificus (strain YJ016).